A 556-amino-acid polypeptide reads, in one-letter code: Serine/threonine-protein kinase PksC (556 aa).

The Protein kinase domain occupies 20-287 (YQLRDLLGEG…SAEAMRDECL (268 aa)). Residues 26-34 (LGEGGMASV) and K49 each bind ATP. Residue D151 is the Proton acceptor of the active site. Disordered stretches follow at residues 300-403 (IVPG…PGGK) and 435-485 (EDPE…DPDK). A compositionally biased stretch (pro residues) spans 336-348 (QPTPSPGPNPYGT). 2 stretches are compositionally biased toward low complexity: residues 360–381 (YPQQAGYQTPAPAPYAQQQAAA) and 445–458 (STASVSASPSKAAG). A compositionally biased stretch (basic and acidic residues) spans 461–475 (GPDKEKTIEKDKCTE). The PASTA domain occupies 482-550 (DPDKIQVPDF…MPEIQLKVST (69 aa)).

This sequence belongs to the protein kinase superfamily. Ser/Thr protein kinase family.

The catalysed reaction is L-seryl-[protein] + ATP = O-phospho-L-seryl-[protein] + ADP + H(+). The enzyme catalyses L-threonyl-[protein] + ATP = O-phospho-L-threonyl-[protein] + ADP + H(+). The polypeptide is Serine/threonine-protein kinase PksC (pksC) (Streptomyces coelicolor (strain ATCC BAA-471 / A3(2) / M145)).